Reading from the N-terminus, the 472-residue chain is UDP-glycosyltransferase 2 (472 aa).

Residues Ser283, 348–349 (WA), 366–374 (HCGWNSVLE), and 388–391 (YAEQ) contribute to the UDP-alpha-D-glucose site.

This sequence belongs to the UDP-glycosyltransferase family. Highly expressed in roots. Expressed in leaves and stems.

Glycosyltransferase that possesses isoflavonoids 4'-O- and 7-O-glucosyltransferase activities. Shows a successive glucosylation toward the acceptors producing their corresponding 4',7-O-diglucosides. Can use genistein, formononetin, daidzein, liquiritigenin and naringenin as substrates. Also shows a 3'-O-glucosylation activity in vitro. The protein is UDP-glycosyltransferase 2 of Pueraria montana var. lobata (Kudzu vine).